Here is a 370-residue protein sequence, read N- to C-terminus: Chaperone protein DnaJ (370 aa).

The J domain occupies 4–68; that stretch reads DYYQVLGVSK…QKRAAYDRFG (65 aa). The CR-type zinc finger occupies 133–211; that stretch reads GIEKNISFSS…CHGMGRYHKQ (79 aa). Zn(2+)-binding residues include Cys-146, Cys-149, Cys-163, Cys-166, Cys-185, Cys-188, Cys-199, and Cys-202. CXXCXGXG motif repeat units follow at residues 146 to 153, 163 to 170, 185 to 192, and 199 to 206; these read CDTCHGTG, CDACGGVG, CHKCQGNG, and CKKCHGMG.

It belongs to the DnaJ family. As to quaternary structure, homodimer. It depends on Zn(2+) as a cofactor.

It is found in the cytoplasm. Participates actively in the response to hyperosmotic and heat shock by preventing the aggregation of stress-denatured proteins and by disaggregating proteins, also in an autonomous, DnaK-independent fashion. Unfolded proteins bind initially to DnaJ; upon interaction with the DnaJ-bound protein, DnaK hydrolyzes its bound ATP, resulting in the formation of a stable complex. GrpE releases ADP from DnaK; ATP binding to DnaK triggers the release of the substrate protein, thus completing the reaction cycle. Several rounds of ATP-dependent interactions between DnaJ, DnaK and GrpE are required for fully efficient folding. Also involved, together with DnaK and GrpE, in the DNA replication of plasmids through activation of initiation proteins. The polypeptide is Chaperone protein DnaJ (Rickettsia prowazekii (strain Madrid E)).